Consider the following 505-residue polypeptide: Prenylcysteine oxidase 1 (505 aa).

Residues 1–28 (MGRFAAALVGSLFWLGLLLCGLGSLASA) form the signal peptide. 3 N-linked (GlcNAc...) asparagine glycosylation sites follow: N196, N323, and N353.

The protein belongs to the prenylcysteine oxidase family. Requires FAD as cofactor. As to expression, highly expressed in the liver, kidney, heart and brain.

The protein resides in the lysosome. The catalysed reaction is an S-polyprenyl-L-cysteine + O2 + H2O = a polyprenal + L-cysteine + H2O2. The enzyme catalyses S-(2E,6E)-farnesyl-L-cysteine + O2 + H2O = (2E,6E)-farnesal + L-cysteine + H2O2. It catalyses the reaction [(2E,6E,10E)-geranylgeranyl]-L-cysteine + O2 + H2O = (2E,6E,10E)-geranylgeranial + L-cysteine + H2O2. Prenylcysteine oxidase that cleaves the thioether bond of prenyl-L-cysteines, such as farnesylcysteine and geranylgeranylcysteine. Only active against free prenylcysteines and not prenylcysteine residues within prenylated proteins or peptides. Involved in the final step in the degradation of prenylated proteins, by degrading prenylcysteines after the protein has been degraded. This is Prenylcysteine oxidase 1 from Mus musculus (Mouse).